A 222-amino-acid chain; its full sequence is Peroxiredoxin (222 aa).

One can recognise a Thioredoxin domain in the interval 7–163 (PRLGEPAPAF…VIRLVDALQT (157 aa)). Cysteine 49 (cysteine sulfenic acid (-SOH) intermediate) is an active-site residue. A substrate-binding site is contributed by arginine 126. A disulfide bond links cysteine 212 and cysteine 218.

This sequence belongs to the peroxiredoxin family. Prx6 subfamily. In terms of assembly, homodecamer. Pentamer of dimers that assemble into a ring structure.

The protein localises to the cytoplasm. The enzyme catalyses a hydroperoxide + [thioredoxin]-dithiol = an alcohol + [thioredoxin]-disulfide + H2O. Its function is as follows. Thiol-specific peroxidase that catalyzes the reduction of hydrogen peroxide and organic hydroperoxides to water and alcohols, respectively. Plays a role in cell protection against oxidative stress by detoxifying peroxides. The chain is Peroxiredoxin from Aquifex aeolicus (strain VF5).